A 103-amino-acid polypeptide reads, in one-letter code: Histone H4, major (103 aa).

Over residues 1–12 (MAGGKGGKGMGK) the composition is skewed to gly residues. Residues 1-29 (MAGGKGGKGMGKVGAKRHSKRSNKASIEG) are disordered. N6-acetyllysine is present on residues Lys-5, Lys-8, Lys-12, and Lys-16. Residues 14–23 (GAKRHSKRSN) are compositionally biased toward basic residues. Residues 16–21 (KRHSKR) mediate DNA binding.

It belongs to the histone H4 family. In terms of assembly, the nucleosome is a histone octamer containing two molecules each of H2A, H2B, H3 and H4 assembled in one H3-H4 heterotetramer and two H2A-H2B heterodimers. The octamer wraps approximately 147 bp of DNA.

The protein localises to the nucleus. Its subcellular location is the chromosome. Functionally, core component of nucleosome. Nucleosomes wrap and compact DNA into chromatin, limiting DNA accessibility to the cellular machineries which require DNA as a template. Histones thereby play a central role in transcription regulation, DNA repair, DNA replication and chromosomal stability. DNA accessibility is regulated via a complex set of post-translational modifications of histones, also called histone code, and nucleosome remodeling. The polypeptide is Histone H4, major (Tetrahymena pyriformis).